The following is a 344-amino-acid chain: 4'-phosphopantetheinyl transferase NpgA (344 aa).

The protein belongs to the P-Pant transferase superfamily.

It catalyses the reaction apo-[ACP] + CoA = holo-[ACP] + adenosine 3',5'-bisphosphate + H(+). Transfers the 4'-phosphopantetheine moiety from coenzyme A to a Ser of an acyl-carrier-protein. The enzyme is able to transfer the cofactor to a broad range of enzymes with acyl- or peptidyl-carrier protein domains. Required for primary biological processes such as growth and asexual/sexual development, and activates target enzymes involved in the synthesis of metabolites such as fatty acids, polyketides and nonribosomal peptides, lysine, siderophore, penicillin, sterigmatocystin, shamixantone, dehydroaustinol, and pigments. The sequence is that of 4'-phosphopantetheinyl transferase NpgA (npgA) from Emericella nidulans (strain FGSC A4 / ATCC 38163 / CBS 112.46 / NRRL 194 / M139) (Aspergillus nidulans).